The following is a 510-amino-acid chain: Metalloprotease TIKI homolog (510 aa).

A signal peptide spans 1-30 (MQVKIVQVFPCLVLLVKLVLLSVLLPSATG). Residues 31-489 (SYHCSNNATQ…FIPSASSGLR (459 aa)) lie on the Extracellular side of the membrane. Residues Asn-37, Asn-98, Asn-108, Asn-141, Asn-223, Asn-281, Asn-322, Asn-383, and Asn-417 are each glycosylated (N-linked (GlcNAc...) asparagine). Positions 435 to 471 (TSLNSATASTTVATPTSSVTPPTSSSSQTRSLTISDS) are enriched in low complexity. Residues 435–477 (TSLNSATASTTVATPTSSVTPPTSSSSQTRSLTISDSQRTSDD) are disordered. The helical transmembrane segment at 490–510 (YNIGLVCVTLFFVLLIITSAL) threads the bilayer.

Belongs to the TIKI family. Mn(2+) is required as a cofactor. Requires Co(2+) as cofactor.

It is found in the membrane. Functionally, metalloprotease. This Amphimedon queenslandica (Sponge) protein is Metalloprotease TIKI homolog.